A 367-amino-acid polypeptide reads, in one-letter code: Mating-type protein ALPHA2 (367 aa).

Positions 273 to 338 form a DNA-binding region, homeobox; TALE-type; sequence GADAIDSEKL…NKRRTGAKKR (66 aa).

It belongs to the TALE/M-ATYP homeobox family. As to quaternary structure, forms a heterodimer with A1.

It is found in the nucleus. Functionally, mating type proteins are sequence specific DNA-binding proteins that act as master switches in yeast differentiation by controlling gene expression in a cell type-specific fashion. Transcriptional corepressor that acts in conjunction with A1 to repress transcription of haploid-specific genes. In Yarrowia lipolytica (strain CLIB 122 / E 150) (Yeast), this protein is Mating-type protein ALPHA2 (MATB2).